Consider the following 212-residue polypeptide: Amelotin (212 aa).

Residues 1–16 form the signal peptide; that stretch reads MKTVVLLLCLLGSAQS. Disordered regions lie at residues 23–42 and 141–212; these read PALG…PLTQ and PSGQ…NRTK. Polar residues-rich tracts occupy residues 33–42 and 165–178; these read TPGQVTPLTQ and PANQ…TTPA.

The protein belongs to the amelotin family. O-glycosylated. In terms of processing, phosphorylated by FAM20C in vitro. As to expression, highest expression in the mandible. Found in the basal lamina of maturation stage ameloblasts of incisors and unerupted molars. Also found in the internal basal lamina of junctional epithelium in molars.

The protein resides in the secreted. Its function is as follows. Is a promoter of calcium phosphate mineralization, playing a critical role in the formation of the compact, mineralized, aprismatic enamel surface layer during the maturation stage of amelogenesis. The chain is Amelotin from Rattus norvegicus (Rat).